Here is a 301-residue protein sequence, read N- to C-terminus: MENHKDDAVLLKHGWCEMLKGGVIMDVKSVEQAKIAEEAGAIGVMVLENIPSELRNKEGVARSVDPSKVEEIKKCVSINVLAKVRIGHFVEAQILEELKIDMIDESEVLTIADEMHHIDKHKFKTPFVCGCTNLGEALRRISEGASMIRTKGEAGTGNIIEAIKHIRTVNNEIKYLCSLSDSEVYHFAKKINAPIDLVLLTKKLKRLPVVNFAAGGVATPADAAMCMQLGMDGVFVGSGIFESENPRKMAASIVSAVSNFNNPKILLDVSMNLGKAMCGSTRVSDKWKNKNEEHTKFLTPQ.

D26 contacts D-ribose 5-phosphate. Catalysis depends on K83, which acts as the Schiff-base intermediate with D-ribose 5-phosphate. G155 provides a ligand contact to D-ribose 5-phosphate. D-glyceraldehyde 3-phosphate is bound at residue R167. Residues G216 and 237 to 238 (GS) each bind D-ribose 5-phosphate.

Belongs to the PdxS/SNZ family. Homohexamer and homododecamer. In the presence of Pdx2, forms a dodecamer of heterodimers.

It is found in the cytoplasm. It catalyses the reaction aldehydo-D-ribose 5-phosphate + D-glyceraldehyde 3-phosphate + L-glutamine = pyridoxal 5'-phosphate + L-glutamate + phosphate + 3 H2O + H(+). It functions in the pathway cofactor biosynthesis; pyridoxal 5'-phosphate biosynthesis. Functionally, catalyzes the formation of pyridoxal 5'-phosphate from ribose 5-phosphate (RBP), glyceraldehyde 3-phosphate (G3P) and ammonia. The ammonia is provided by Pdx2. Can also use ribulose 5-phosphate and dihydroxyacetone phosphate as substrates, resulting from enzyme-catalyzed isomerization of RBP and G3P, respectively. The chain is Pyridoxal 5'-phosphate synthase subunit Pdx1 (pdx1) from Plasmodium falciparum (isolate 3D7).